The following is a 682-amino-acid chain: MSRKQLALFEPTLVVQALKEAVKKLNPQAQWRNPVMFIVWIGSLLTTCISIAMASGAMPGNALFSAAISGWLWVTVLFANFAEALAEGRSKAQANSLKGVKKTAFARKLREPKYGAAADKVPADQLRKGDIVLVEAGDIIPCDGEVIEGGASVDESAITGESAPVIRESGGDFASVTGGTRILSDWLVIECSVNPGETFLDRMIAMVEGAQRRKTPNEIALTILLIALTIVFLLATATLWPFSAWGGNAVSVTVLVALLVCLIPTTIGGLLSAIGVAGMSRMLGANVIATSGRAVEAAGDVDVLLLDKTGTITLGNRQASEFIPAQGVDEKTLADAAQLASLADETPEGRSIVILAKQRFNLRERDVQSLHATFVPFTAQSRMSGINIDNRMIRKGSVDAIRRHVEANGGHFPADVDQKVDQVARQGATPLVVVEGSRVLGVIALKDIVKGGIKERFAQLRKMDIKTVMITGDNRLTAAAIAAEAGVDDFLAEATPEAKLALIRQYQAESRLVAMTGDGTNDAPALAQADVAVAMNSGTQAAKEAGNMVALDSNPTKLIEVVHIGKQMLMTRGSLTTFSIANDVAKYFAIIPAAFAATYPQLNALNIMRLHSPDSAILSAVIFNALIIVFLIPLALKGVSYKPLTASAMLRRNLWIYGLGGLLVPFIGIKVIDLLLTVCGLV.

A run of 4 helical transmembrane segments spans residues Pro-34–Ala-54, Ala-62–Ala-82, Ile-219–Leu-239, and Val-254–Ile-274. Asp-307 (4-aspartylphosphate intermediate) is an active-site residue. ATP contacts are provided by residues Asp-344, Glu-348, Phe-377–Ser-384, and Lys-395. Mg(2+) contacts are provided by Asp-518 and Asp-522. The next 3 membrane-spanning stretches (helical) occupy residues Phe-588–Met-608, Ala-616–Leu-636, and Ile-656–Leu-676.

This sequence belongs to the cation transport ATPase (P-type) (TC 3.A.3) family. Type IA subfamily. The system is composed of three essential subunits: KdpA, KdpB and KdpC.

Its subcellular location is the cell inner membrane. It carries out the reaction K(+)(out) + ATP + H2O = K(+)(in) + ADP + phosphate + H(+). In terms of biological role, part of the high-affinity ATP-driven potassium transport (or Kdp) system, which catalyzes the hydrolysis of ATP coupled with the electrogenic transport of potassium into the cytoplasm. This subunit is responsible for energy coupling to the transport system and for the release of the potassium ions to the cytoplasm. The polypeptide is Potassium-transporting ATPase ATP-binding subunit (Shigella boydii serotype 18 (strain CDC 3083-94 / BS512)).